The sequence spans 833 residues: Glycerol-3-phosphate acyltransferase (833 aa).

Positions 309 to 314 (CHRSHI) match the HXXXXD motif motif.

Belongs to the GPAT/DAPAT family.

It localises to the cell inner membrane. It carries out the reaction sn-glycerol 3-phosphate + an acyl-CoA = a 1-acyl-sn-glycero-3-phosphate + CoA. It participates in phospholipid metabolism; CDP-diacylglycerol biosynthesis; CDP-diacylglycerol from sn-glycerol 3-phosphate: step 1/3. The polypeptide is Glycerol-3-phosphate acyltransferase (Pseudomonas savastanoi pv. phaseolicola (strain 1448A / Race 6) (Pseudomonas syringae pv. phaseolicola (strain 1448A / Race 6))).